Consider the following 524-residue polypeptide: Rho guanine nucleotide exchange factor 3 (524 aa).

A disordered region spans residues 75–98 (SDSRPDLFSPRPWSRNTPAANTKR). In terms of domain architecture, DH spans 121–303 (IKRQEAIFEL…IQGIVAEINI (183 aa)). The PH domain maps to 290 to 448 (AINIIQGIVA…QWLNCIRQAK (159 aa)).

The protein localises to the cytoplasm. In terms of biological role, acts as a guanine nucleotide exchange factor (GEF) for RhoA and RhoB GTPases. The chain is Rho guanine nucleotide exchange factor 3 (Arhgef3) from Gallus gallus (Chicken).